A 610-amino-acid chain; its full sequence is Prolactin receptor (610 aa).

The N-terminal stretch at 1–19 is a signal peptide; it reads MPSALAFVLLVLNISLLKG. Over 20–229 the chain is Extracellular; the sequence is QSPPGKPEIH…EMPNDFTLKD (210 aa). Fibronectin type-III domains lie at 22–122 and 124–224; these read PPGK…IVEP and PPRN…MPND. Cys-31 and Cys-41 are disulfide-bonded. Asn-54 is a glycosylation site (N-linked (GlcNAc...) asparagine). Cys-70 and Cys-81 are joined by a disulfide. Residues Asn-99 and Asn-127 are each glycosylated (N-linked (GlcNAc...) asparagine). Zn(2+) contacts are provided by Asp-206 and His-207. The WSXWS motif motif lies at 210–214; sequence WSRWS. The chain crosses the membrane as a helical span at residues 230–253; that stretch reads TTVWIIVAILSAVICLIMVWAVAL. Residues 254-610 lie on the Cytoplasmic side of the membrane; that stretch reads KGYSMMTCIF…DPTCFMHSFH (357 aa). A Box 1 motif motif is present at residues 262-270; sequence IFPPVPGPK. Disordered stretches follow at residues 317–355, 458–482, and 564–584; these read DERL…HSLL, TGEE…TPWP, and AKKA…ASFT. The segment covering 318–327 has biased composition (basic and acidic residues); sequence ERLMPSHSKE. The span at 345-354 shows a compositional bias: low complexity; that stretch reads GHGSYDSHSL.

It belongs to the type I cytokine receptor family. Type 1 subfamily. As to quaternary structure, interacts with SMARCA1. Interacts with NEK3 and VAV2 and this interaction is prolactin-dependent.

It is found in the membrane. Functionally, this is a receptor for the anterior pituitary hormone prolactin. The protein is Prolactin receptor (Prlr) of Rattus norvegicus (Rat).